A 587-amino-acid chain; its full sequence is Glutathione hydrolase proenzyme (587 aa).

Residues 1–28 form the signal peptide; sequence MKRTWNVCLTALLSVLLVAGSVPFHAEA. Residues 29 to 35 constitute a propeptide that is removed on maturation; sequence KKPPKSY. R113 contributes to the L-glutamate binding site. T403 functions as the Nucleophile in the catalytic mechanism. L-glutamate is bound by residues T421, E423, E442, D445, 464 to 465, and 485 to 486; these read SS and GG.

It belongs to the gamma-glutamyltransferase family. As to quaternary structure, this enzyme consists of two polypeptide chains, which are synthesized in precursor form from a single polypeptide. In terms of processing, cleaved by autocatalysis into a large and small subunit.

Its subcellular location is the secreted. The enzyme catalyses an N-terminal (5-L-glutamyl)-[peptide] + an alpha-amino acid = 5-L-glutamyl amino acid + an N-terminal L-alpha-aminoacyl-[peptide]. The catalysed reaction is glutathione + H2O = L-cysteinylglycine + L-glutamate. It carries out the reaction an S-substituted glutathione + H2O = an S-substituted L-cysteinylglycine + L-glutamate. It participates in sulfur metabolism; glutathione metabolism. Inhibited by glucose. In terms of biological role, cleaves the gamma-glutamyl bond of extracellular glutathione (gamma-Glu-Cys-Gly), glutathione conjugates, and other gamma-glutamyl compounds. The metabolism of glutathione releases free glutamate and the dipeptide cysteinyl-glycine, which is hydrolyzed to cysteine and glycine by dipeptidases. Uses glutamine as a gamma-glutamyl donor and acceptor for gamma-polyglutamic acid synthesis. Dipeptides are better gamma-glutamyl acceptors than free amino acids. The polypeptide is Glutathione hydrolase proenzyme (ggt) (Bacillus subtilis subsp. natto).